Here is a 446-residue protein sequence, read N- to C-terminus: Tubulin beta-6 chain (446 aa).

GTP is bound by residues Gln-11, Glu-69, Ser-138, Gly-142, Thr-143, Gly-144, Asn-204, and Asn-226. Mg(2+) is bound at residue Glu-69. Residues 426–446 are disordered; sequence QDATADEEEYEDEEEVQADDM. Residues 429–446 show a composition bias toward acidic residues; it reads TADEEEYEDEEEVQADDM.

Belongs to the tubulin family. As to quaternary structure, dimer of alpha and beta chains. A typical microtubule is a hollow water-filled tube with an outer diameter of 25 nm and an inner diameter of 15 nM. Alpha-beta heterodimers associate head-to-tail to form protofilaments running lengthwise along the microtubule wall with the beta-tubulin subunit facing the microtubule plus end conferring a structural polarity. Microtubules usually have 13 protofilaments but different protofilament numbers can be found in some organisms and specialized cells. Mg(2+) is required as a cofactor.

The protein resides in the cytoplasm. It localises to the cytoskeleton. In terms of biological role, tubulin is the major constituent of microtubules, a cylinder consisting of laterally associated linear protofilaments composed of alpha- and beta-tubulin heterodimers. Microtubules grow by the addition of GTP-tubulin dimers to the microtubule end, where a stabilizing cap forms. Below the cap, tubulin dimers are in GDP-bound state, owing to GTPase activity of alpha-tubulin. The polypeptide is Tubulin beta-6 chain (TUBB6) (Zea mays (Maize)).